The primary structure comprises 173 residues: Large ribosomal subunit protein uL29c (173 aa).

The N-terminal 60 residues, 1–60, are a transit peptide targeting the chloroplast; the sequence is MLSLSIATPGTAAIFRRGTASATSTSSSFHGVRIQHQVSARVPAAATISSSSPKPSVVMM. The segment at 143-173 is disordered; that stretch reads KKSIVPRPPPSLKKLQEEEAAEEAAEAAKSA. Ser-172 bears the Phosphoserine mark.

Belongs to the universal ribosomal protein uL29 family. Part of the 50S ribosomal subunit.

Its subcellular location is the plastid. It localises to the chloroplast. The polypeptide is Large ribosomal subunit protein uL29c (RPL29) (Arabidopsis thaliana (Mouse-ear cress)).